A 176-amino-acid chain; its full sequence is Large ribosomal subunit protein uL10 (176 aa).

Belongs to the universal ribosomal protein uL10 family. In terms of assembly, part of the ribosomal stalk of the 50S ribosomal subunit. The N-terminus interacts with L11 and the large rRNA to form the base of the stalk. The C-terminus forms an elongated spine to which L12 dimers bind in a sequential fashion forming a multimeric L10(L12)X complex.

Forms part of the ribosomal stalk, playing a central role in the interaction of the ribosome with GTP-bound translation factors. The protein is Large ribosomal subunit protein uL10 of Marinobacter nauticus (strain ATCC 700491 / DSM 11845 / VT8) (Marinobacter aquaeolei).